The following is a 107-amino-acid chain: Integration host factor subunit alpha (107 aa).

It belongs to the bacterial histone-like protein family. As to quaternary structure, heterodimer of an alpha and a beta chain.

Functionally, this protein is one of the two subunits of integration host factor, a specific DNA-binding protein that functions in genetic recombination as well as in transcriptional and translational control. This Bartonella tribocorum (strain CIP 105476 / IBS 506) protein is Integration host factor subunit alpha.